A 159-amino-acid chain; its full sequence is C-type lectin 1 (159 aa).

Residues Met1–Gly23 form the signal peptide. Disulfide bonds link Cys26/Cys37, Cys54/Cys155, Cys61/Cys157, and Cys130/Cys147. The C-type lectin domain maps to Met33–Gln156. N-linked (GlcNAc...) asparagine glycosylation is present at Asn118. Residues Leu119–Asp121 carry the Sugar-binding motif. Residues Asp121, Asp127, and Asn143 each coordinate Ca(2+).

It belongs to the true venom lectin family. Homodimer; disulfide-linked. As to expression, expressed by the venom gland.

Its subcellular location is the secreted. Functionally, lectin which recognizes specific carbohydrate structures and agglutinates a variety of animal cells by binding to cell-surface glycoproteins and glycolipids. May be a calcium-dependent lectin. The sequence is that of C-type lectin 1 from Bitis gabonica (Gaboon adder).